We begin with the raw amino-acid sequence, 505 residues long: uncharacterized protein (505 aa).

Residues 11–27 traverse the membrane as a helical segment; it reads IGIIGGGIVGWLAAIAL.

It localises to the membrane. This is an uncharacterized protein from Sinorhizobium fredii (strain NBRC 101917 / NGR234).